Here is a 150-residue protein sequence, read N- to C-terminus: SsrA-binding protein (150 aa).

The tract at residues 127-150 (KRETEKQRDWQREKARIMKGDAKD) is disordered.

The protein belongs to the SmpB family.

The protein localises to the cytoplasm. In terms of biological role, required for rescue of stalled ribosomes mediated by trans-translation. Binds to transfer-messenger RNA (tmRNA), required for stable association of tmRNA with ribosomes. tmRNA and SmpB together mimic tRNA shape, replacing the anticodon stem-loop with SmpB. tmRNA is encoded by the ssrA gene; the 2 termini fold to resemble tRNA(Ala) and it encodes a 'tag peptide', a short internal open reading frame. During trans-translation Ala-aminoacylated tmRNA acts like a tRNA, entering the A-site of stalled ribosomes, displacing the stalled mRNA. The ribosome then switches to translate the ORF on the tmRNA; the nascent peptide is terminated with the 'tag peptide' encoded by the tmRNA and targeted for degradation. The ribosome is freed to recommence translation, which seems to be the essential function of trans-translation. The chain is SsrA-binding protein from Cupriavidus necator (strain ATCC 17699 / DSM 428 / KCTC 22496 / NCIMB 10442 / H16 / Stanier 337) (Ralstonia eutropha).